Consider the following 327-residue polypeptide: Phenylalanine--tRNA ligase alpha subunit (327 aa).

Glu-252 lines the Mg(2+) pocket.

The protein belongs to the class-II aminoacyl-tRNA synthetase family. Phe-tRNA synthetase alpha subunit type 1 subfamily. Tetramer of two alpha and two beta subunits. Mg(2+) is required as a cofactor.

The protein localises to the cytoplasm. The enzyme catalyses tRNA(Phe) + L-phenylalanine + ATP = L-phenylalanyl-tRNA(Phe) + AMP + diphosphate + H(+). This is Phenylalanine--tRNA ligase alpha subunit from Shigella sonnei (strain Ss046).